A 419-amino-acid polypeptide reads, in one-letter code: MDKLAIQASPPLAGDVIISGAKNAALPILMAGVLAETDFIVSNVPNLRDVSTSCKLLRCLGADVDELGNGQIRISTKNLNEFCAPYDLVKTMRASILILGPLLARYGTADVSLPGGCAIGARPVNLHLHGLEMMGAKIEVKEGYIKARVDGRLKGAHIFMDMVSVGATENLLMAAALADGETVIENAAREPEVIDLANCLIAMGAKITGVGSATLRIQGVERLQGCEYRVMPDRIETGSFLVAAAVTRGRIRCLKADPASLESVIAKLEDAGAKITTGEDWIELDMEGKRPKAVNIKTAPYPGFPTDMQAQFCVLNVLAQGTATITETIFENRFMHVPELIRMGANMELEGNTCIIQGIESLSGAQVMATDLRASASLVIAGLVADGKTIVDRIYHLDRGYEHIEQKFQGLGAHVERVQ.

22–23 (KN) lines the phosphoenolpyruvate pocket. R93 contributes to the UDP-N-acetyl-alpha-D-glucosamine binding site. C117 (proton donor) is an active-site residue. Residue C117 is modified to 2-(S-cysteinyl)pyruvic acid O-phosphothioketal. Residues D307 and I329 each contribute to the UDP-N-acetyl-alpha-D-glucosamine site.

It belongs to the EPSP synthase family. MurA subfamily.

The protein localises to the cytoplasm. It catalyses the reaction phosphoenolpyruvate + UDP-N-acetyl-alpha-D-glucosamine = UDP-N-acetyl-3-O-(1-carboxyvinyl)-alpha-D-glucosamine + phosphate. It participates in cell wall biogenesis; peptidoglycan biosynthesis. Cell wall formation. Adds enolpyruvyl to UDP-N-acetylglucosamine. The protein is UDP-N-acetylglucosamine 1-carboxyvinyltransferase of Shewanella sp. (strain ANA-3).